Reading from the N-terminus, the 406-residue chain is Renin (406 aa).

The first 23 residues, 1–23 (MDGWRRMPRWGLLLLLWGSCTFG), serve as a signal peptide directing secretion. Residues 24 to 66 (LPTDTTTFKRIFLKRMPSIRESLKERGVDMARLGPEWSQPMKR) constitute a propeptide, activation peptide. Asn71 is a glycosylation site (N-linked (GlcNAc...) asparagine). A Peptidase A1 domain is found at 86 to 403 (YYGEIGIGTP…DRRNNRIGFA (318 aa)). Asp104 is a catalytic residue. A disulfide bridge links Cys117 with Cys124. Asn141 is a glycosylation site (N-linked (GlcNAc...) asparagine). Cysteines 283 and 287 form a disulfide. Asp292 is a catalytic residue. An intrachain disulfide couples Cys325 to Cys362.

This sequence belongs to the peptidase A1 family. Interacts with ATP6AP2.

The protein resides in the secreted. It is found in the membrane. The catalysed reaction is Cleavage of Leu-|-Xaa bond in angiotensinogen to generate angiotensin I.. Interaction with ATP6AP2 results in a 5-fold increased efficiency in angiotensinogen processing. In terms of biological role, renin is a highly specific endopeptidase, whose only known function is to generate angiotensin I from angiotensinogen in the plasma, initiating a cascade of reactions that produce an elevation of blood pressure and increased sodium retention by the kidney. This Macaca mulatta (Rhesus macaque) protein is Renin (REN).